Consider the following 139-residue polypeptide: NADH-quinone oxidoreductase subunit A (139 aa).

Transmembrane regions (helical) follow at residues 16-36 (GLFI…ASLL), 69-89 (LVAM…AWAV), and 94-114 (VGWE…AGLV).

It belongs to the complex I subunit 3 family. In terms of assembly, NDH-1 is composed of 14 different subunits. Subunits NuoA, H, J, K, L, M, N constitute the membrane sector of the complex.

It localises to the cell inner membrane. The catalysed reaction is a quinone + NADH + 5 H(+)(in) = a quinol + NAD(+) + 4 H(+)(out). Its function is as follows. NDH-1 shuttles electrons from NADH, via FMN and iron-sulfur (Fe-S) centers, to quinones in the respiratory chain. The immediate electron acceptor for the enzyme in this species is believed to be ubiquinone. Couples the redox reaction to proton translocation (for every two electrons transferred, four hydrogen ions are translocated across the cytoplasmic membrane), and thus conserves the redox energy in a proton gradient. The sequence is that of NADH-quinone oxidoreductase subunit A from Chromohalobacter salexigens (strain ATCC BAA-138 / DSM 3043 / CIP 106854 / NCIMB 13768 / 1H11).